Reading from the N-terminus, the 712-residue chain is Small ribosomal subunit protein uS3c (712 aa).

Positions Met-1–Asn-118 are S3-like 1st part. The intervening sequence (IVS) stretch occupies residues Leu-119 to Glu-580. The interval Ser-581–Ile-712 is S3-like 2nd part.

It belongs to the universal ribosomal protein uS3 family. Part of the 30S ribosomal subunit.

Its subcellular location is the plastid. It is found in the chloroplast. This Chlamydomonas reinhardtii (Chlamydomonas smithii) protein is Small ribosomal subunit protein uS3c (rps3).